We begin with the raw amino-acid sequence, 351 residues long: uncharacterized protein (351 aa).

It belongs to the bacterial luciferase oxidoreductase family.

This is an uncharacterized protein from Sinorhizobium fredii (strain NBRC 101917 / NGR234).